A 777-amino-acid chain; its full sequence is Glucocorticoid receptor (777 aa).

The segment covering 1–14 (MDSKESLTPGKEEN) has biased composition (basic and acidic residues). Residues 1-23 (MDSKESLTPGKEENPSSVLTQER) form a disordered region. Residues 1–420 (MDSKESLTPG…TATTGPPPKL (420 aa)) are modulating. Thr-8 bears the Phosphothreonine mark. Omega-N-methylarginine is present on Arg-23. Residues Ser-45, Ser-113, Ser-134, and Ser-141 each carry the phosphoserine modification. The interval 130 to 182 (NRSTSVPENPKSSASSSVSAAPKEKEFPKTHSDVSSEQQNLKGQTGTNGGNVK) is disordered. A compositionally biased stretch (low complexity) spans 134–150 (SVPENPKSSASSSVSAA). Positions 151 to 163 (PKEKEFPKTHSDV) are enriched in basic and acidic residues. Residues 164–174 (SSEQQNLKGQT) show a composition bias toward polar residues. Phosphoserine occurs at positions 203, 211, and 226. Lys-258 is covalently cross-linked (Glycyl lysine isopeptide (Lys-Gly) (interchain with G-Cter in SUMO2)). Ser-267 carries the phosphoserine modification. Glycyl lysine isopeptide (Lys-Gly) (interchain with G-Cter in SUMO); alternate cross-links involve residues Lys-277 and Lys-293. Residues Lys-277 and Lys-293 each participate in a glycyl lysine isopeptide (Lys-Gly) (interchain with G-Cter in SUMO2); alternate cross-link. The span at 394–414 (SSPSMRPDVSSPPSSSSTATT) shows a compositional bias: low complexity. The segment at 394-415 (SSPSMRPDVSSPPSSSSTATTG) is disordered. Position 404 is a phosphoserine (Ser-404). Residue Lys-419 forms a Glycyl lysine isopeptide (Lys-Gly) (interchain with G-Cter in ubiquitin) linkage. NR C4-type zinc fingers lie at residues 421-441 (CLVCSDEASGCHYGVLTCGSC) and 457-481 (CAGRNDCIIDKIRRKNCPACRYRKC). The segment at residues 421-486 (CLVCSDEASG…RYRKCLQAGM (66 aa)) is a DNA-binding region (nuclear receptor). 4 positions are modified to N6-acetyllysine: Lys-480, Lys-492, Lys-494, and Lys-495. Residues 485 to 777 (GMNLEARKTK…NIKKLLFHQK (293 aa)) form an interaction with CLOCK region. The tract at residues 487-523 (NLEARKTKKKIKGIQQATTGVSQETSENPANKTIVPA) is hinge. The NR LBD domain maps to 524–758 (TLPQLTPTLV…FPEMLAEIIT (235 aa)). The interaction with CRY1 stretch occupies residues 532–697 (LVSLLEVIEP…EIRMTYIKEL (166 aa)). Lys-703 participates in a covalent cross-link: Glycyl lysine isopeptide (Lys-Gly) (interchain with G-Cter in SUMO).

The protein belongs to the nuclear hormone receptor family. NR3 subfamily. Heteromultimeric cytoplasmic complex with HSP90AA1, HSPA1A/HSPA1B, and FKBP5 or another immunophilin such as PPID, STIP1, or the immunophilin homolog PPP5C. Upon ligand binding FKBP5 dissociates from the complex and FKBP4 takes its place, thereby linking the complex to dynein and mediating transport to the nucleus, where the complex dissociates. Probably forms a complex composed of chaperones HSP90 and HSP70, co-chaperones CDC37, PPP5C, TSC1 and client protein TSC2, CDK4, AKT, RAF1 and NR3C1; this complex does not contain co-chaperones STIP1/HOP and PTGES3/p23. Directly interacts with UNC45A. Binds to DNA as a homodimer, and as heterodimer with NR3C2 or the retinoid X receptor. Binds STAT5A and STAT5B homodimers and heterodimers. Interacts with NRIP1, POU2F1, POU2F2 and TRIM28. Interacts with several coactivator complexes, including the SMARCA4 complex, CREBBP/EP300, TADA2L (Ada complex) and p160 coactivators such as NCOA2 and NCOA6. Interaction with BAG1 inhibits transactivation. Interacts with HEXIM1 and TGFB1I1. Interacts with NCOA1. Interacts with NCOA3, SMARCA4, SMARCC1, SMARCD1, and SMARCE1. Interacts with CLOCK, CRY1 and CRY2 in a ligand-dependent fashion. Interacts with CIART. Interacts with RWDD3. Interacts with UBE2I/UBC9 and this interaction is enhanced in the presence of RWDD3. Interacts with GRIP1. Interacts with NR4A3 (via nuclear receptor DNA-binding domain), represses transcription activity of NR4A3 on the POMC promoter Nur response element (NurRE). Directly interacts with PNRC2 to attract and form a complex with UPF1 and DCP1A; the interaction leads to rapid mRNA degradation. Interacts with GSK3B. Interacts with FNIP1 and FNIP2. Interacts (via C-terminus) with HNRNPU (via C-terminus). Interacts with MCM3AP. Interacts (via domain NR LBD) with HSP90AA1 and HSP90AB1. In the absence of hormonal ligand, interacts with TACC1. Interacts (via NR LBD domain) with ZNF764 (via KRAB domain); the interaction regulates transcription factor activity of NR3C1 by directing its actions toward certain biologic pathways. Acetylation by CLOCK reduces its binding to glucocorticoid response elements and its transcriptional activity. Post-translationally, increased proteasome-mediated degradation in response to glucocorticoids. In terms of processing, phosphorylated in the absence of hormone; becomes hyperphosphorylated in the presence of glucocorticoid. The Ser-203, Ser-226 and Ser-404-phosphorylated forms are mainly cytoplasmic, and the Ser-211-phosphorylated form is nuclear. Phosphorylation at Ser-211 increases transcriptional activity. Phosphorylation at Ser-203, Ser-226 and Ser-404 decreases signaling capacity. Phosphorylation at Ser-404 may protect from glucocorticoid-induced apoptosis. Phosphorylation at Ser-203 and Ser-211 is not required in regulation of chromosome segregation. May be dephosphorylated by PPP5C, attenuates NR3C1 action. Ubiquitinated by UBR5, leading to its degradation: UBR5 specifically recognizes and binds ligand-bound NR3C1 when it is not associated with coactivators (NCOAs). In presence of NCOAs, the UBR5-degron is not accessible, preventing its ubiquitination and degradation. Post-translationally, sumoylation at Lys-277 and Lys-293 negatively regulates its transcriptional activity. Sumoylation at Lys-703 positively regulates its transcriptional activity in the presence of RWDD3. Sumoylation at Lys-277 and Lys-293 is dispensable whereas sumoylation at Lys-703 is critical for the stimulatory effect of RWDD3 on its transcriptional activity. Heat shock increases sumoylation in a RWWD3-dependent manner.

It is found in the cytoplasm. The protein localises to the nucleus. It localises to the mitochondrion. The protein resides in the cytoskeleton. Its subcellular location is the spindle. It is found in the microtubule organizing center. The protein localises to the centrosome. It localises to the chromosome. The protein resides in the nucleoplasm. Receptor for glucocorticoids (GC). Has a dual mode of action: as a transcription factor that binds to glucocorticoid response elements (GRE), both for nuclear and mitochondrial DNA, and as a modulator of other transcription factors. Affects inflammatory responses, cellular proliferation and differentiation in target tissues. Involved in chromatin remodeling. Plays a role in rapid mRNA degradation by binding to the 5' UTR of target mRNAs and interacting with PNRC2 in a ligand-dependent manner which recruits the RNA helicase UPF1 and the mRNA-decapping enzyme DCP1A, leading to RNA decay. Could act as a coactivator for STAT5-dependent transcription upon growth hormone (GH) stimulation and could reveal an essential role of hepatic GR in the control of body growth. Mediates glucocorticoid-induced apoptosis. Promotes accurate chromosome segregation during mitosis. May act as a tumor suppressor. May play a negative role in adipogenesis through the regulation of lipolytic and antilipogenic gene expression. This Aotus nancymaae (Ma's night monkey) protein is Glucocorticoid receptor (NR3C1).